The sequence spans 332 residues: Azadirone synthase LFS (332 aa).

The region spanning 181–286 (ANANYTNMFH…RYSTGTFICP (106 aa)) is the Fe2OG dioxygenase domain. Residues His-208, Asp-210, and His-269 each contribute to the Fe cation site. Arg-277 contacts 2-oxoglutarate.

It belongs to the iron/ascorbate-dependent oxidoreductase family. Requires Fe(2+) as cofactor. As to expression, mainly expressed in petioles and, to a lower extent, in roots.

It carries out the reaction (1S,3bR,4R,5aR,9aR,9bR,11aS)-1-(1-hydroxy-4-oxobutan-2-yl)-3b,6,6,9a,11a-pentamethyl-7-oxo-1H,2H,3bH,4H,5H,5aH,6H,7H,9aH,9bH,10H,11H,11aH-cyclopenta[a]phenanthren-4-yl acetate + 2-oxoglutarate + O2 = azadirone + succinate + CO2 + 2 H2O. It participates in secondary metabolite biosynthesis; terpenoid biosynthesis. 2-oxoglutarate-Fe(II) type oxidoreductase involved in the biosynthesis of limonoids triterpene natural products such as azadirachtin, an antifeedant widely used as bioinsecticide, and possessing many medicinal applications including anti-tumoral, anti-malarial, anti-rheumatic, antibacterial, anti-inflammatory, anti-pyretic and diuretic effects. Catalyzes the formation of azadirone. In Melia azedarach (Chinaberry tree), this protein is Azadirone synthase LFS.